Consider the following 177-residue polypeptide: Large ribosomal subunit protein uL6 (177 aa).

The protein belongs to the universal ribosomal protein uL6 family. As to quaternary structure, part of the 50S ribosomal subunit.

Its function is as follows. This protein binds to the 23S rRNA, and is important in its secondary structure. It is located near the subunit interface in the base of the L7/L12 stalk, and near the tRNA binding site of the peptidyltransferase center. This is Large ribosomal subunit protein uL6 from Bordetella petrii (strain ATCC BAA-461 / DSM 12804 / CCUG 43448).